A 122-amino-acid chain; its full sequence is MKLLSGLLLCSLVLGVSSQRWFSFIGEATQGAWDMWRAYSDMREANYINADKYFHARGNYDAAQRGPGGVWAAKVISDAREDLQRLMGHGAEDSMADQAANEWGRSGKDPNHFRPKGLPDKY.

The first 19 residues, 1–19 (MKLLSGLLLCSLVLGVSSQ), serve as a signal peptide directing secretion. The important for amyloid formation stretch occupies residues 20-45 (RWFSFIGEATQGAWDMWRAYSDMREA). A disordered region spans residues 87–122 (MGHGAEDSMADQAANEWGRSGKDPNHFRPKGLPDKY). Residues 105 to 122 (RSGKDPNHFRPKGLPDKY) show a composition bias toward basic and acidic residues.

It belongs to the SAA family. In terms of assembly, homohexamer; dimer of trimers. Can form amyloid fibrils after partial proteolysis; the native, undenatured protein does not form amyloid fibrils (in vitro). Apolipoprotein of the HDL complex. Binds to heparin. As to expression, detected in liver.

The protein localises to the secreted. Its function is as follows. Major acute phase protein. This chain is Serum amyloid A-1 protein (SAA1), found in Oryctolagus cuniculus (Rabbit).